A 426-amino-acid polypeptide reads, in one-letter code: MQKSEALFTRAQKTIPGGVNSPVRAFKAVGGTPRFITKADGAYMWDADGKQYIDYIQSWGPMILGHNNAPIREAVIEASCSGLSFGAPTEAEVIMAELVSEMVPSMEMVRMVNSGTEATMSAIRLARGYTSRNKIVKFEGCYHGHADSLLVKAGSGALTLGVPSSPGVPANVAEHTLTVEFNNLDSVKEIFETHGDDIACIIVEPVAGNMNCIPPVEGFLEGLRAICDQYGSVLIFDEVMTGFRVSRGGAQERFNVKPDLTCLGKVIGGGMPVGCFGGRRDIITHIAPTGPVYQAGTLSGNPVAMAAGLAALTQIKQPGLYDSIFENTQALVDGFQDLADKHNISLTTNIAGSMFGIFFTDVEKVTNYKQAINCNTEQFNKFYHGMLEQGVYLAPASYEAGFVSKAHDAEVIEKTLAAADKVFSTL.

K265 carries the post-translational modification N6-(pyridoxal phosphate)lysine.

Belongs to the class-III pyridoxal-phosphate-dependent aminotransferase family. HemL subfamily. As to quaternary structure, homodimer. The cofactor is pyridoxal 5'-phosphate.

The protein resides in the cytoplasm. It catalyses the reaction (S)-4-amino-5-oxopentanoate = 5-aminolevulinate. Its pathway is porphyrin-containing compound metabolism; protoporphyrin-IX biosynthesis; 5-aminolevulinate from L-glutamyl-tRNA(Glu): step 2/2. In Alteromonas mediterranea (strain DSM 17117 / CIP 110805 / LMG 28347 / Deep ecotype), this protein is Glutamate-1-semialdehyde 2,1-aminomutase.